We begin with the raw amino-acid sequence, 170 residues long: tRNA-splicing endonuclease (170 aa).

Active-site residues include Y106, H116, and K147.

Belongs to the tRNA-intron endonuclease family. Archaeal short subfamily. In terms of assembly, homotetramer; although the tetramer contains four active sites, only two participate in the cleavage. Therefore, it should be considered as a dimer of dimers.

The enzyme catalyses pretRNA = a 3'-half-tRNA molecule with a 5'-OH end + a 5'-half-tRNA molecule with a 2',3'-cyclic phosphate end + an intron with a 2',3'-cyclic phosphate and a 5'-hydroxyl terminus.. Endonuclease that removes tRNA introns. Cleaves pre-tRNA at the 5'- and 3'-splice sites to release the intron. The products are an intron and two tRNA half-molecules bearing 2',3' cyclic phosphate and 5'-OH termini. Recognizes a pseudosymmetric substrate in which 2 bulged loops of 3 bases are separated by a stem of 4 bp. This chain is tRNA-splicing endonuclease, found in Methanothermobacter thermautotrophicus (strain ATCC 29096 / DSM 1053 / JCM 10044 / NBRC 100330 / Delta H) (Methanobacterium thermoautotrophicum).